The chain runs to 445 residues: N-succinylarginine dihydrolase (445 aa).

Substrate-binding positions include 19–28 (AGLSYGNVAS), asparagine 110, and 137–138 (HR). Glutamate 174 is an active-site residue. Arginine 214 provides a ligand contact to substrate. The active site involves histidine 250. Substrate contacts are provided by aspartate 252 and asparagine 363. Cysteine 369 (nucleophile) is an active-site residue.

The protein belongs to the succinylarginine dihydrolase family. Homodimer.

The catalysed reaction is N(2)-succinyl-L-arginine + 2 H2O + 2 H(+) = N(2)-succinyl-L-ornithine + 2 NH4(+) + CO2. It functions in the pathway amino-acid degradation; L-arginine degradation via AST pathway; L-glutamate and succinate from L-arginine: step 2/5. Catalyzes the hydrolysis of N(2)-succinylarginine into N(2)-succinylornithine, ammonia and CO(2). This is N-succinylarginine dihydrolase from Shewanella loihica (strain ATCC BAA-1088 / PV-4).